The primary structure comprises 275 residues: 3-methyl-2-oxobutanoate hydroxymethyltransferase (275 aa).

Aspartate 49 and aspartate 88 together coordinate Mg(2+). Residues aspartate 49–serine 50, aspartate 88, and lysine 118 each bind 3-methyl-2-oxobutanoate. Position 120 (glutamate 120) interacts with Mg(2+). Glutamate 187 (proton acceptor) is an active-site residue.

The protein belongs to the PanB family. Homodecamer; pentamer of dimers. Mg(2+) is required as a cofactor.

It is found in the cytoplasm. The catalysed reaction is 3-methyl-2-oxobutanoate + (6R)-5,10-methylene-5,6,7,8-tetrahydrofolate + H2O = 2-dehydropantoate + (6S)-5,6,7,8-tetrahydrofolate. It functions in the pathway cofactor biosynthesis; (R)-pantothenate biosynthesis; (R)-pantoate from 3-methyl-2-oxobutanoate: step 1/2. In terms of biological role, catalyzes the reversible reaction in which hydroxymethyl group from 5,10-methylenetetrahydrofolate is transferred onto alpha-ketoisovalerate to form ketopantoate. The polypeptide is 3-methyl-2-oxobutanoate hydroxymethyltransferase (Hyphomonas neptunium (strain ATCC 15444)).